Consider the following 485-residue polypeptide: Aldehyde dehydrogenase family 3 member A2 (485 aa).

Residues 1 to 463 (MEREVQRVRQ…FLLRRFNKEK (463 aa)) lie on the Cytoplasmic side of the membrane. Position 185 to 190 (185 to 190 (GNTAVG)) interacts with NAD(+). Active-site residues include glutamate 207 and cysteine 241. Serine 293 bears the Phosphoserine mark. Residues 464–484 (LGLLVLTFLGIVAAVLVNAGY) traverse the membrane as a helical segment. Residues 481 to 484 (NAGY) carry the Prevents secretion from ER motif.

It belongs to the aldehyde dehydrogenase family. In terms of assembly, homodimer.

Its subcellular location is the microsome membrane. The protein localises to the endoplasmic reticulum membrane. It catalyses the reaction an aldehyde + NAD(+) + H2O = a carboxylate + NADH + 2 H(+). The enzyme catalyses a fatty aldehyde + NAD(+) + H2O = a fatty acid + NADH + 2 H(+). It carries out the reaction (2E)-hexadecenal + NAD(+) + H2O = (E)-hexadec-2-enoate + NADH + 2 H(+). The catalysed reaction is hexadecanoate + NADH + 2 H(+) = hexadecanal + NAD(+) + H2O. It catalyses the reaction 22-oxodocosanoate + NAD(+) + H2O = docosanedioate + NADH + 2 H(+). The enzyme catalyses 2,6,10,14-tetramethylpentadecanal + NAD(+) + H2O = 2,6,10,14-tetramethylpentadecanoate + NADH + 2 H(+). It carries out the reaction octadecanal + NAD(+) + H2O = octadecanoate + NADH + 2 H(+). The catalysed reaction is dodecanoate + NADH + 2 H(+) = dodecanal + NAD(+) + H2O. It catalyses the reaction decanal + NAD(+) + H2O = decanoate + NADH + 2 H(+). The enzyme catalyses tetradecanal + NAD(+) + H2O = tetradecanoate + NADH + 2 H(+). It carries out the reaction octanal + NAD(+) + H2O = octanoate + NADH + 2 H(+). The catalysed reaction is heptanal + NAD(+) + H2O = heptanoate + NADH + 2 H(+). It catalyses the reaction (2E,6E)-farnesal + NAD(+) + H2O = (2E,6E)-farnesoate + NADH + 2 H(+). Its function is as follows. Catalyzes the oxidation of medium and long-chain aliphatic aldehydes to fatty acids. Active on a variety of saturated and unsaturated aliphatic aldehydes between 6 and 24 carbons in length. Responsible for conversion of the sphingosine 1-phosphate (S1P) degradation product hexadecenal to hexadecenoic acid. The protein is Aldehyde dehydrogenase family 3 member A2 (ALDH3A2) of Macaca fascicularis (Crab-eating macaque).